Reading from the N-terminus, the 485-residue chain is tRNA sulfurtransferase (485 aa).

The THUMP domain maps to 63-167 (ERYAERLACI…NEHLYLVEKR (105 aa)). ATP contacts are provided by residues 185–186 (LI), Lys267, Gly289, and Gln298. A disulfide bridge connects residues Cys346 and Cys458. The Rhodanese domain occupies 406 to 484 (VSGGEVVVDI…GYHNVKVYRP (79 aa)). The active-site Cysteine persulfide intermediate is the Cys458.

The protein belongs to the ThiI family.

The protein localises to the cytoplasm. It carries out the reaction [ThiI sulfur-carrier protein]-S-sulfanyl-L-cysteine + a uridine in tRNA + 2 reduced [2Fe-2S]-[ferredoxin] + ATP + H(+) = [ThiI sulfur-carrier protein]-L-cysteine + a 4-thiouridine in tRNA + 2 oxidized [2Fe-2S]-[ferredoxin] + AMP + diphosphate. The catalysed reaction is [ThiS sulfur-carrier protein]-C-terminal Gly-Gly-AMP + S-sulfanyl-L-cysteinyl-[cysteine desulfurase] + AH2 = [ThiS sulfur-carrier protein]-C-terminal-Gly-aminoethanethioate + L-cysteinyl-[cysteine desulfurase] + A + AMP + 2 H(+). It functions in the pathway cofactor biosynthesis; thiamine diphosphate biosynthesis. Functionally, catalyzes the ATP-dependent transfer of a sulfur to tRNA to produce 4-thiouridine in position 8 of tRNAs, which functions as a near-UV photosensor. Also catalyzes the transfer of sulfur to the sulfur carrier protein ThiS, forming ThiS-thiocarboxylate. This is a step in the synthesis of thiazole, in the thiamine biosynthesis pathway. The sulfur is donated as persulfide by IscS. This is tRNA sulfurtransferase from Shewanella loihica (strain ATCC BAA-1088 / PV-4).